The primary structure comprises 113 residues: Ig heavy chain V-III region U61 (113 aa).

The region spanning 1–113 (EVKLEESGGG…YWGQGTLVPV (113 aa)) is the Ig-like domain. Cysteines 22 and 98 form a disulfide.

This chain is Ig heavy chain V-III region U61, found in Mus musculus (Mouse).